A 508-amino-acid polypeptide reads, in one-letter code: Glycerol kinase (508 aa).

ADP is bound at residue Thr-14. Residues Thr-14, Thr-15, and Ser-16 each contribute to the ATP site. Thr-14 contacts sn-glycerol 3-phosphate. Arg-18 is an ADP binding site. Positions 84, 85, and 136 each coordinate sn-glycerol 3-phosphate. Positions 84, 85, and 136 each coordinate glycerol. Phosphohistidine; by HPr is present on His-232. Sn-glycerol 3-phosphate is bound at residue Asp-246. Asp-246 and Gln-247 together coordinate glycerol. ADP is bound by residues Thr-268 and Gly-311. The ATP site is built by Thr-268, Gly-311, Gln-315, and Gly-412. Positions 412 and 416 each coordinate ADP.

It belongs to the FGGY kinase family. In terms of assembly, homotetramer and homodimer (in equilibrium). Post-translationally, the phosphoenolpyruvate-dependent sugar phosphotransferase system (PTS), including enzyme I, and histidine-containing protein (HPr) are required for the phosphorylation, which leads to the activation of the enzyme.

It carries out the reaction glycerol + ATP = sn-glycerol 3-phosphate + ADP + H(+). Its pathway is polyol metabolism; glycerol degradation via glycerol kinase pathway; sn-glycerol 3-phosphate from glycerol: step 1/1. With respect to regulation, activated by phosphorylation and inhibited by fructose 1,6-bisphosphate (FBP). Functionally, key enzyme in the regulation of glycerol uptake and metabolism. Catalyzes the phosphorylation of glycerol to yield sn-glycerol 3-phosphate. This chain is Glycerol kinase, found in Streptococcus pyogenes serotype M4 (strain MGAS10750).